A 341-amino-acid chain; its full sequence is tRNA N6-adenosine threonylcarbamoyltransferase (341 aa).

His-111 and His-115 together coordinate Fe cation. Substrate-binding positions include 134 to 138, Asp-167, Gly-180, and Asn-276; that span reads LVSGG. Asp-304 is a Fe cation binding site.

It belongs to the KAE1 / TsaD family. The cofactor is Fe(2+).

The protein localises to the cytoplasm. It catalyses the reaction L-threonylcarbamoyladenylate + adenosine(37) in tRNA = N(6)-L-threonylcarbamoyladenosine(37) in tRNA + AMP + H(+). Functionally, required for the formation of a threonylcarbamoyl group on adenosine at position 37 (t(6)A37) in tRNAs that read codons beginning with adenine. Is involved in the transfer of the threonylcarbamoyl moiety of threonylcarbamoyl-AMP (TC-AMP) to the N6 group of A37, together with TsaE and TsaB. TsaD likely plays a direct catalytic role in this reaction. This chain is tRNA N6-adenosine threonylcarbamoyltransferase, found in Pseudomonas putida (strain W619).